The chain runs to 554 residues: (E)-nerolidol synthase TPS18VF (554 aa).

Positions 276, 313, 317, 455, and 458 each coordinate (2E,6E)-farnesyl diphosphate. Residues aspartate 313 and aspartate 317 each coordinate Mg(2+). The DDXXD motif signature appears at 313-317 (DDIFD). Residues aspartate 458, serine 462, and glutamate 466 each coordinate Mg(2+).

Belongs to the terpene synthase family. Tpsb subfamily. Requires Mg(2+) as cofactor. Mn(2+) is required as a cofactor. In terms of tissue distribution, highly expressed in glandular trichomes.

The enzyme catalyses (2E,6E)-farnesyl diphosphate + H2O = (6E)-nerolidol + diphosphate. It carries out the reaction (2E)-geranyl diphosphate + H2O = (R)-linalool + diphosphate. The catalysed reaction is (2E)-geranyl diphosphate + H2O = (S)-linalool + diphosphate. It functions in the pathway secondary metabolite biosynthesis; terpenoid biosynthesis. Its function is as follows. Involved in sesquiterpene olefins biosynthesis, constituants of cannabinoids and terpenoids-rich resins. Catalyzes primarily the conversion of (2E)-farnesyl diphosphate to (E)-nerolidol, and the conversion of (2E)-geranyl diphosphate to (+)linalool and (-)linalool. In Cannabis sativa (Hemp), this protein is (E)-nerolidol synthase TPS18VF.